Here is a 389-residue protein sequence, read N- to C-terminus: Chorismate synthase (389 aa).

2 residues coordinate NADP(+): R39 and R45. Residues 130–132, 251–252, G296, 311–315, and R338 each bind FMN; these read RSS, NA, and KPIPT.

This sequence belongs to the chorismate synthase family. As to quaternary structure, homotetramer. FMNH2 is required as a cofactor.

The catalysed reaction is 5-O-(1-carboxyvinyl)-3-phosphoshikimate = chorismate + phosphate. It functions in the pathway metabolic intermediate biosynthesis; chorismate biosynthesis; chorismate from D-erythrose 4-phosphate and phosphoenolpyruvate: step 7/7. Its function is as follows. Catalyzes the anti-1,4-elimination of the C-3 phosphate and the C-6 proR hydrogen from 5-enolpyruvylshikimate-3-phosphate (EPSP) to yield chorismate, which is the branch point compound that serves as the starting substrate for the three terminal pathways of aromatic amino acid biosynthesis. This reaction introduces a second double bond into the aromatic ring system. This Oceanobacillus iheyensis (strain DSM 14371 / CIP 107618 / JCM 11309 / KCTC 3954 / HTE831) protein is Chorismate synthase.